We begin with the raw amino-acid sequence, 330 residues long: Biotin synthase 2 (330 aa).

The 231-residue stretch at 48–278 folds into the Radical SAM core domain; sequence MCGDGFDMCS…QAAIRLAGGR (231 aa). [4Fe-4S] cluster is bound by residues Cys-66, Cys-70, and Cys-73. Residues Ser-111, Cys-143, Cys-203, and Arg-273 each coordinate [2Fe-2S] cluster.

This sequence belongs to the radical SAM superfamily. Biotin synthase family. As to quaternary structure, homodimer. It depends on [4Fe-4S] cluster as a cofactor. [2Fe-2S] cluster is required as a cofactor.

It carries out the reaction (4R,5S)-dethiobiotin + (sulfur carrier)-SH + 2 reduced [2Fe-2S]-[ferredoxin] + 2 S-adenosyl-L-methionine = (sulfur carrier)-H + biotin + 2 5'-deoxyadenosine + 2 L-methionine + 2 oxidized [2Fe-2S]-[ferredoxin]. Its pathway is cofactor biosynthesis; biotin biosynthesis; biotin from 7,8-diaminononanoate: step 2/2. Functionally, catalyzes the conversion of dethiobiotin (DTB) to biotin by the insertion of a sulfur atom into dethiobiotin via a radical-based mechanism. The polypeptide is Biotin synthase 2 (Corynebacterium diphtheriae (strain ATCC 700971 / NCTC 13129 / Biotype gravis)).